Consider the following 102-residue polypeptide: Small ribosomal subunit protein uS10 (102 aa).

This sequence belongs to the universal ribosomal protein uS10 family. Part of the 30S ribosomal subunit.

Its function is as follows. Involved in the binding of tRNA to the ribosomes. The polypeptide is Small ribosomal subunit protein uS10 (Methylorubrum populi (strain ATCC BAA-705 / NCIMB 13946 / BJ001) (Methylobacterium populi)).